A 783-amino-acid polypeptide reads, in one-letter code: Na(+)/H(+) exchanger protein 7 (783 aa).

A helical membrane pass occupies residues 1 to 18 (MWIKLLFFFTTLLVSTSG). Topologically, residues 19–108 (LGDDGITALL…WHWDYVKNEL (90 aa)) are extracellular. Residues 109-129 (VLTLFFIVIGLFKLVYHHTFV) traverse the membrane as a helical segment. The Cytoplasmic segment spans residues 130–132 (TRK). The helical transmembrane segment at 133–153 (ILPESCCLIFIGIAIGFFFVG) threads the bilayer. Topologically, residues 154-159 (DATHAS) are extracellular. Residues 160–180 (IKFLEFKSKVFFFYLLPPIIL) form a helical membrane-spanning segment. Residues 181–206 (ESAYSLKDRAFIENIGTILLYAVVGT) lie on the Cytoplasmic side of the membrane. A helical membrane pass occupies residues 207 to 227 (ILNIVLLAAALLILIWVGIMG). Topologically, residues 228–235 (KYNLSVMD) are extracellular. The helical transmembrane segment at 236 to 256 (ILTFASLVAAVDPVAVLAVFQ) threads the bilayer. The Cytoplasmic portion of the chain corresponds to 257–262 (EVGVNK). Residues 263–283 (MLYFMVFGESLFNDAVTIVCY) traverse the membrane as a helical segment. Topologically, residues 284–299 (NLAIEFQTLPDFTWYH) are extracellular. A helical membrane pass occupies residues 300–320 (GFLGLLSFLCVSIGGLIIGLI). The Cytoplasmic segment spans residues 321-350 (CGAISSFVTKFTTDVRVVEPVVLFGMAYLA). A helical transmembrane segment spans residues 351 to 371 (YLGSEMFHFSGIIALIACGLF). Topologically, residues 372–390 (QTHYACCNISYKSFTSVMY) are extracellular. An N-linked (GlcNAc...) asparagine glycan is attached at asparagine 379. An intramembrane region (helical) is located at residues 391–411 (ITKVCSTLCESLIFIILGVML). Residues 412–424 (VNEREWFWTDWHP) lie on the Extracellular side of the membrane. Residues 425 to 445 (VFSAVSVVLCVVVRFGVTFFL) traverse the membrane as a helical segment. Residues 446–464 (TYFVNQFTGGVRHISFQEQ) are Cytoplasmic-facing. A helical membrane pass occupies residues 465–485 (FIMSYGGLRGAVSFSLVFMIS). Topologically, residues 486–492 (ANPDVKN) are extracellular. Residues 493–513 (TMLGATYAVILFTNIIQGSTI) traverse the membrane as a helical segment. Over 514-783 (KLFVKWLNIR…TITESEETSF (270 aa)) the chain is Cytoplasmic. A coiled-coil region spans residues 649–702 (DNEDADQRANELIKDVSSIRQLMHNPFEDCYLDRNLTHEEEKEQARLKMKKTRA). The tract at residues 745–783 (RPSTSTRVSVEDEEQGLTMKEMEEEHPLMTITESEETSF) is disordered.

Belongs to the monovalent cation:proton antiporter 1 (CPA1) transporter (TC 2.A.36) family. As to quaternary structure, interacts (via C-terminus) with cmd-1. Detected in the posterior cells of the intestine.

The protein resides in the basolateral cell membrane. Its function is as follows. Na+/H+ exchanger which mediates the transient acidification of the coelomic space and plays a role in contraction of posterior body muscles during defecation. Probably by regulating the defecation motor program, required for fatty acid uptake by intestinal cells. This is Na(+)/H(+) exchanger protein 7 from Caenorhabditis elegans.